A 278-amino-acid polypeptide reads, in one-letter code: 3-methyl-2-oxobutanoate hydroxymethyltransferase (278 aa).

Positions 43 and 82 each coordinate Mg(2+). 3-methyl-2-oxobutanoate-binding positions include 43-44 (DS), Asp-82, and Lys-112. Residue Glu-114 participates in Mg(2+) binding. Catalysis depends on Glu-181, which acts as the Proton acceptor.

This sequence belongs to the PanB family. In terms of assembly, homodecamer; pentamer of dimers. Requires Mg(2+) as cofactor.

The protein localises to the cytoplasm. The enzyme catalyses 3-methyl-2-oxobutanoate + (6R)-5,10-methylene-5,6,7,8-tetrahydrofolate + H2O = 2-dehydropantoate + (6S)-5,6,7,8-tetrahydrofolate. Its pathway is cofactor biosynthesis; (R)-pantothenate biosynthesis; (R)-pantoate from 3-methyl-2-oxobutanoate: step 1/2. Its function is as follows. Catalyzes the reversible reaction in which hydroxymethyl group from 5,10-methylenetetrahydrofolate is transferred onto alpha-ketoisovalerate to form ketopantoate. This chain is 3-methyl-2-oxobutanoate hydroxymethyltransferase, found in Bacillus cereus (strain AH187).